The chain runs to 363 residues: p21-activated protein kinase-interacting protein 1-like (363 aa).

WD repeat units lie at residues 38–75, 78–116, 119–158, 200–238, and 241–282; these read AHTA…EHGA, HHNG…CQQT, AHKG…SAFI, NNPK…CVCE, and AHEN…VQTS. The tract at residues 309-363 is disordered; the sequence is KEKSNTAVTASAVKDCDRPKKKKAQNETTDKEASETQVVHKKRKPETKQKKKKPS. The segment covering 322-342 has biased composition (basic and acidic residues); the sequence is KDCDRPKKKKAQNETTDKEAS. Residues 347-363 show a composition bias toward basic residues; that stretch reads VHKKRKPETKQKKKKPS.

It is found in the nucleus. It localises to the nucleolus. Its function is as follows. Negatively regulates the PAK1 kinase. PAK1 is a member of the PAK kinase family, which has been shown to play a positive role in the regulation of signaling pathways involving MAPK8 and RELA. PAK1 exists as an inactive homodimer, which is activated by binding of small GTPases such as CDC42 to an N-terminal regulatory domain. PAK1IP1 also binds to the N-terminus of PAK1, and inhibits the specific activation of PAK1 by CDC42. May be involved in ribosomal large subunit assembly. The sequence is that of p21-activated protein kinase-interacting protein 1-like (pak1ip1) from Xenopus laevis (African clawed frog).